A 330-amino-acid polypeptide reads, in one-letter code: Fructose-1,6-bisphosphatase class 1 (330 aa).

The Mg(2+) site is built by E84, D103, L105, and D106. Residues 106–109 (DGSS), N196, and K262 contribute to the substrate site. Residue E268 coordinates Mg(2+).

The protein belongs to the FBPase class 1 family. As to quaternary structure, homotetramer. Requires Mg(2+) as cofactor.

The protein localises to the cytoplasm. It catalyses the reaction beta-D-fructose 1,6-bisphosphate + H2O = beta-D-fructose 6-phosphate + phosphate. It participates in carbohydrate biosynthesis; gluconeogenesis. This is Fructose-1,6-bisphosphatase class 1 from Shewanella sp. (strain MR-7).